The primary structure comprises 416 residues: UPF0761 membrane protein Rfer_2991 (416 aa).

The next 6 membrane-spanning stretches (helical) occupy residues Met-60 to Ala-80, Leu-117 to Asp-137, Val-156 to Ile-176, Val-187 to Val-207, Trp-222 to Ala-242, and Ile-268 to Ala-288.

It belongs to the UPF0761 family.

It is found in the cell inner membrane. In Albidiferax ferrireducens (strain ATCC BAA-621 / DSM 15236 / T118) (Rhodoferax ferrireducens), this protein is UPF0761 membrane protein Rfer_2991.